Consider the following 352-residue polypeptide: Protein-glutamate methylesterase/protein-glutamine glutaminase 2 (352 aa).

The region spanning 1 to 116 (MVVDDSAVVR…KQFLTDSADE (116 aa)) is the Response regulatory domain. Position 50 is a 4-aspartylphosphate (D50). The region spanning 162–352 (AQTTERIVAI…MAREIVTQLQ (191 aa)) is the CheB-type methylesterase domain. Residues S174, H200, and D296 contribute to the active site.

The protein belongs to the CheB family. Phosphorylated by CheA. Phosphorylation of the N-terminal regulatory domain activates the methylesterase activity.

It is found in the cytoplasm. The catalysed reaction is [protein]-L-glutamate 5-O-methyl ester + H2O = L-glutamyl-[protein] + methanol + H(+). The enzyme catalyses L-glutaminyl-[protein] + H2O = L-glutamyl-[protein] + NH4(+). In terms of biological role, involved in chemotaxis. Part of a chemotaxis signal transduction system that modulates chemotaxis in response to various stimuli. Catalyzes the demethylation of specific methylglutamate residues introduced into the chemoreceptors (methyl-accepting chemotaxis proteins or MCP) by CheR. Also mediates the irreversible deamidation of specific glutamine residues to glutamic acid. The protein is Protein-glutamate methylesterase/protein-glutamine glutaminase 2 of Xanthomonas campestris pv. campestris (strain ATCC 33913 / DSM 3586 / NCPPB 528 / LMG 568 / P 25).